The following is a 392-amino-acid chain: Major outer membrane protein P.IA (392 aa).

Residues 1 to 19 form the signal peptide; that stretch reads MRKKLTALVLSALPLAAVA.

Belongs to the Gram-negative porin family. As to quaternary structure, homotrimer.

It is found in the cell outer membrane. Its function is as follows. Serves as a slightly cation selective porin. Major antigen on the gonococcal cell surface and it may have pathogenic properties in addition to its porin activity. This Neisseria meningitidis serogroup B / serotype 15 (strain H44/76) protein is Major outer membrane protein P.IA (porA).